A 314-amino-acid chain; its full sequence is Protein phosphatase PTC7 homolog fig (314 aa).

A PPM-type phosphatase domain is found at 43–309 (PYLVTVVQGR…DDITLILSSV (267 aa)). Residues aspartate 87, glycine 88, and aspartate 232 each contribute to the Mn(2+) site.

It belongs to the PP2C family. The cofactor is Mg(2+). Mn(2+) serves as cofactor.

It catalyses the reaction O-phospho-L-seryl-[protein] + H2O = L-seryl-[protein] + phosphate. The enzyme catalyses O-phospho-L-threonyl-[protein] + H2O = L-threonyl-[protein] + phosphate. The sequence is that of Protein phosphatase PTC7 homolog fig from Drosophila sechellia (Fruit fly).